The chain runs to 386 residues: MRIGVGVCTTPDARQAAVEAAGQARDELAGEAPSLAVLLGSRAHTDRAADVLSAVLQMIDPPALVGCIAQAIVAGRHEIEDEPAVVVWLASGLAAETFQLDFVRTGSGALITGYRFDRTARDLHLLLPDPYTFPSNLLIEHPNTDLPGTAVVGGVVSGGRRRGDTRLFRDHDVLTSGVVGVRLPGMRGVPVVSQGCRPIGYPYIVTGADGILITELGGRPPLQRLREIVEGLSPDERALVSHGLQIGIVVDEHLAAPGQGDFVIRGLLGADPSTGSIEIDEVVQVGATMQFQVRDAAGADKDLRLTVERAAARLPGRAAGALLFTCNGRGRRMFGVADHDASTIEELLGGIPLAGFFAAGEIGPIAGRNALHGFTASMALFVDDME.

The next 2 helical transmembrane spans lie at 54 to 74 (AVLQMIDPPALVGCIAQAIVA) and 347 to 367 (LLGGIPLAGFFAAGEIGPIAG).

To M.tuberculosis Rv0628c.

The protein localises to the cell membrane. This is an uncharacterized protein from Mycobacterium tuberculosis (strain CDC 1551 / Oshkosh).